Reading from the N-terminus, the 217-residue chain is Peroxiredoxin (217 aa).

The region spanning 2-159 is the Thioredoxin domain; sequence AVIGEKFPDV…VVRLVKALQT (158 aa). C46 functions as the Cysteine sulfenic acid (-SOH) intermediate in the catalytic mechanism. R122 serves as a coordination point for substrate.

This sequence belongs to the peroxiredoxin family. Prx6 subfamily. As to quaternary structure, homodecamer. Pentamer of dimers that assemble into a ring structure.

It localises to the cytoplasm. It catalyses the reaction a hydroperoxide + [thioredoxin]-dithiol = an alcohol + [thioredoxin]-disulfide + H2O. Its function is as follows. Thiol-specific peroxidase that catalyzes the reduction of hydrogen peroxide and organic hydroperoxides to water and alcohols, respectively. Plays a role in cell protection against oxidative stress by detoxifying peroxides. The chain is Peroxiredoxin from Methanococcus vannielii (strain ATCC 35089 / DSM 1224 / JCM 13029 / OCM 148 / SB).